A 230-amino-acid chain; its full sequence is Claudin-2 (230 aa).

Residues 1–7 (MASLGLQ) are Cytoplasmic-facing. Residues 8 to 28 (LVGYILGLLGLLGTLVAMLLP) traverse the membrane as a helical segment. Over 29-81 (SWKTSSYVGASIVTAVGFSKGLWMECATHSTGITQCDIYSTLLGLPADIQAAQ) the chain is Extracellular. C54 and C64 are oxidised to a cystine. The helical transmembrane segment at 82 to 102 (AMMVTSSAISSLACIISVVGM) threads the bilayer. Over 103 to 116 (RCTVFCQESRAKDR) the chain is Cytoplasmic. A helical membrane pass occupies residues 117-137 (VAVAGGVFFILGGLLGFIPVA). Residues 138–162 (WNLHGILRDFYSPLVPDSMKFEIGE) are Extracellular-facing. The chain crosses the membrane as a helical span at residues 163 to 183 (ALYLGIISSLFSLIAGIILCF). Topologically, residues 184-230 (SCSSQRNRSNYYDAYQAQPLATRSSPRPGQPPKVKSEFNSYSLTGYV) are cytoplasmic. The interval 205–230 (TRSSPRPGQPPKVKSEFNSYSLTGYV) is disordered. K218 participates in a covalent cross-link: Glycyl lysine isopeptide (Lys-Gly) (interchain with G-Cter in SUMO). Phosphoserine is present on residues S219 and S223. A compositionally biased stretch (polar residues) spans 220 to 230 (EFNSYSLTGYV). Residues 229–230 (YV) form an interactions with TJP1, TJP2 and TJP3 region.

The protein belongs to the claudin family. In terms of assembly, can form homo- and heteropolymers with other claudins to mediate paracellular barrier and channel functions of tight junctions in response to physiological stimuli. Homopolymers interact with CLDN3, but not CLDN1, homopolymers. Directly interacts with TJP1/ZO-1, TJP2/ZO-2 and TJP3/ZO-3. The disulfide bond is necessary for pore formation, but is not required for correct protein trafficking.

The protein localises to the cell junction. Its subcellular location is the tight junction. It localises to the cell membrane. It catalyses the reaction Na(+)(in) = Na(+)(out). The enzyme catalyses K(+)(in) = K(+)(out). The catalysed reaction is Rb(+)(in) = Rb(+)(out). It carries out the reaction Li(+)(in) = Li(+)(out). It catalyses the reaction Cs(+)(in) = Cs(+)(out). The enzyme catalyses Ca(2+)(in) = Ca(2+)(out). The catalysed reaction is methylamine(out) = methylamine(in). It carries out the reaction choline(out) = choline(in). It catalyses the reaction H2O(in) = H2O(out). Forms paracellular channels: polymerizes in tight junction strands with cation- and water-selective channels through the strands, conveying epithelial permeability in a process known as paracellular tight junction permeability. In intestinal epithelium, allows for sodium and water fluxes from the peritoneal side to the lumen of the intestine to regulate nutrient absorption and clear enteric pathogens as part of mucosal immune response. In kidney, allows passive sodium and calcium reabsorption across proximal tubules from the lumen back to the bloodstream. In the hepatobiliary tract, allows paracellular water and cation fluxes in the hepatic perivenous areas and biliary epithelium to generate bile flow and maintain osmotic gradients. In Homo sapiens (Human), this protein is Claudin-2.